The sequence spans 52 residues: Phospholamban (52 aa).

Methionine 1 is subject to N-acetylmethionine. The Cytoplasmic portion of the chain corresponds to 1-31 (MEKVQYITRSALRRASTLEVNPQARQRLQEL). Phosphoserine; by PKA is present on serine 16. Phosphothreonine; by CaMK is present on threonine 17. Residues 32–52 (FVNFCLILICLLLICIIVMLL) traverse the membrane as a helical segment.

It belongs to the phospholamban family. In terms of assembly, homopentamer. Phosphorylated in response to beta-adrenergic stimulation. Phosphorylation by PKA abolishes the inhibition of ATP2A2-mediated calcium uptake. Heart.

It is found in the endoplasmic reticulum membrane. It localises to the sarcoplasmic reticulum membrane. Its subcellular location is the mitochondrion membrane. The protein localises to the membrane. In terms of biological role, reversibly inhibits the activity of ATP2A2/SERCA2 in cardiac sarcoplasmic reticulum by decreasing the apparent affinity of the ATPase for Ca(2+). Binds preferentially to the ATP-bound E1 conformational form of ATP2A2 which predominates at low Ca(2+) concentrations during the diastolic phase of the cardiac cycle. Inhibits ATP2A2 Ca(2+) affinity by disrupting its allosteric activation by ATP. Modulates the contractility of the heart muscle in response to physiological stimuli via its effects on ATP2A2. Modulates calcium re-uptake during muscle relaxation and plays an important role in calcium homeostasis in the heart muscle. The degree of ATP2A2 inhibition depends on the oligomeric state of PLN. ATP2A2 inhibition is alleviated by PLN phosphorylation. The chain is Phospholamban (PLN) from Gallus gallus (Chicken).